The following is a 914-amino-acid chain: Serine/threonine kinase SAD-1 (914 aa).

One can recognise a Protein kinase domain in the interval 47 to 298; sequence YKLEKTLGKG…LADVFKHPWV (252 aa). Residues 53-61 and Lys76 contribute to the ATP site; that span reads LGKGQTGLV. Asp169 serves as the catalytic Proton acceptor. 3 disordered regions span residues 375–551, 563–590, and 757–914; these read AQED…SPPS, TMNSTNSSTNSLIAGNSQTSIGSTSGPW, and NSTQ…ADKV. Basic and acidic residues predominate over residues 393–402; sequence PPKKRTDSSR. Low complexity predominate over residues 444–462; that stretch reads RSSTRDLFGSSSSGSYSAR. The span at 473 to 482 shows a compositional bias: polar residues; sequence ASRSTNSYHY. Basic and acidic residues predominate over residues 495-526; that stretch reads AARHVRDAQERRESRDSGRGSSRKESKDRSDK. Low complexity-rich tracts occupy residues 527–551 and 563–573; these read SASSSSCKNDASSTSSVPHKYSPPS and TMNSTNSSTNS. Residues 574-590 are compositionally biased toward polar residues; that stretch reads LIAGNSQTSIGSTSGPW. The segment covering 780–796 has biased composition (low complexity); the sequence is DSSVGSACSDSESNASS. Over residues 823-837 the composition is skewed to polar residues; the sequence is SMRSVGSGTANSYKS. Positions 850 to 876 are enriched in low complexity; that stretch reads ASSSSASNRYGPSSSSSGSYSNNADYS. Positions 882–903 are enriched in polar residues; it reads SQRSNGSSAPKNQYSPGSQRSF.

This sequence belongs to the protein kinase superfamily. CAMK Ser/Thr protein kinase family. SNF1 subfamily. As to quaternary structure, interacts with strd-1 and nab-1. Requires Mg(2+) as cofactor. As to expression, expressed in neurons. Colocalizes with strd-1 along the dorsal nerve cord.

It is found in the synapse. It catalyses the reaction L-seryl-[protein] + ATP = O-phospho-L-seryl-[protein] + ADP + H(+). The catalysed reaction is L-threonyl-[protein] + ATP = O-phospho-L-threonyl-[protein] + ADP + H(+). In terms of biological role, regulates both neuronal polarity and synaptic organization when bound to strd-1. Kinase activity is required for the establishment, but not the maintenance, of both processes. Binding to nab-1 is essential for role in restricting axonal fate during neuronal polarization but is not required for regulating synapse morphology. This is Serine/threonine kinase SAD-1 from Caenorhabditis elegans.